We begin with the raw amino-acid sequence, 310 residues long: Protein FIP2 (310 aa).

The disordered stretch occupies residues methionine 1–arginine 58. Residues tyrosine 14–asparagine 25 show a composition bias toward acidic residues. Phosphoserine occurs at positions 77 and 105. Disordered stretches follow at residues alanine 115 to glycine 135, phenylalanine 152 to aspartate 171, and aspartate 177 to serine 221. Residues proline 208 to serine 221 show a composition bias toward polar residues.

Interacts with FRI. Interacts with WAV3.

The sequence is that of Protein FIP2 from Arabidopsis thaliana (Mouse-ear cress).